Consider the following 475-residue polypeptide: Aspartyl/glutamyl-tRNA(Asn/Gln) amidotransferase subunit B (475 aa).

It belongs to the GatB/GatE family. GatB subfamily. In terms of assembly, heterotrimer of A, B and C subunits.

It catalyses the reaction L-glutamyl-tRNA(Gln) + L-glutamine + ATP + H2O = L-glutaminyl-tRNA(Gln) + L-glutamate + ADP + phosphate + H(+). The enzyme catalyses L-aspartyl-tRNA(Asn) + L-glutamine + ATP + H2O = L-asparaginyl-tRNA(Asn) + L-glutamate + ADP + phosphate + 2 H(+). Functionally, allows the formation of correctly charged Asn-tRNA(Asn) or Gln-tRNA(Gln) through the transamidation of misacylated Asp-tRNA(Asn) or Glu-tRNA(Gln) in organisms which lack either or both of asparaginyl-tRNA or glutaminyl-tRNA synthetases. The reaction takes place in the presence of glutamine and ATP through an activated phospho-Asp-tRNA(Asn) or phospho-Glu-tRNA(Gln). This chain is Aspartyl/glutamyl-tRNA(Asn/Gln) amidotransferase subunit B, found in Staphylococcus aureus (strain bovine RF122 / ET3-1).